A 626-amino-acid polypeptide reads, in one-letter code: Chaperone protein HtpG (626 aa).

The tract at residues 1 to 343 (MHKQTLSFQA…SADLPLNVSR (343 aa)) is a; substrate-binding. Positions 344-558 (ELLQESRAVK…DGDMSTQLAR (215 aa)) are b. Residues 559-626 (MLKQAGQAVP…YVKRVNALLV (68 aa)) are c.

Belongs to the heat shock protein 90 family. Homodimer.

The protein resides in the cytoplasm. Functionally, molecular chaperone. Has ATPase activity. In Polaromonas sp. (strain JS666 / ATCC BAA-500), this protein is Chaperone protein HtpG.